Consider the following 379-residue polypeptide: MEVKSLLMVMATLTIAGCSQNEMTEMNPDTNRTIGLDVYTEVQTRGTETTTSTLKANAGFGIFAYQTSSAGWNSEKGNTTPNFMYNEHATWTSDSWGYTNLRFWPIDDKKITFFAYAPYESKPEVGTDQKITLSGQNAKGAPTITFEVKTSNNWKDMIDLVTDCHTAIQDQTNESNKGTVQFKFSHVLTQIANIKVKPDVNLGTDTKIFVTGLKLDPGSTTLYNKAVYKFDNDTWEAISPDASYFSTEQDLSDFLNKTTTDQWGYNKSSINVSDDQNATALFSDTEALYFIPVNNKNGTTNAGDLKLKINYDIVTKVTDTSNLTSTITNKEVSLPKNTFKKGTKHTYVLTIKMNAIKITVEDNMEGWTDDSDSDINVEK.

Positions 1–17 (MEVKSLLMVMATLTIAG) are cleaved as a signal peptide. A lipid anchor (N-palmitoyl cysteine) is attached at cysteine 18. Cysteine 18 carries S-diacylglycerol cysteine lipidation. A propeptide spanning residues 18–45 (CSQNEMTEMNPDTNRTIGLDVYTEVQTR) is cleaved from the precursor.

The protein belongs to the bacteroidetes fimbrillin superfamily. Mfa-like family. As to quaternary structure, may be part of the fimbrial tip.

The protein localises to the fimbrium. Its subcellular location is the cell outer membrane. Probably a component of the fimbrium tip. Fimbriae are filamentous appendages on the cell surface that mediate cell adhesion and biofilm formation. This is Fimbrium subunit Fim1C (fim1C) from Phocaeicola vulgatus (strain ATCC 8482 / DSM 1447 / JCM 5826 / CCUG 4940 / NBRC 14291 / NCTC 11154) (Bacteroides vulgatus).